A 131-amino-acid chain; its full sequence is Hydrogenase maturation factor HypA (131 aa).

His2 is a Ni(2+) binding site. Positions 73, 76, 105, and 108 each coordinate Zn(2+).

Belongs to the HypA/HybF family.

Involved in the maturation of [NiFe] hydrogenases. Required for nickel insertion into the metal center of the hydrogenase. In Thermomicrobium roseum (strain ATCC 27502 / DSM 5159 / P-2), this protein is Hydrogenase maturation factor HypA.